A 474-amino-acid polypeptide reads, in one-letter code: ATP synthase subunit beta 1 (474 aa).

157 to 164 is an ATP binding site; the sequence is GGAGVGKT.

Belongs to the ATPase alpha/beta chains family. F-type ATPases have 2 components, CF(1) - the catalytic core - and CF(0) - the membrane proton channel. CF(1) has five subunits: alpha(3), beta(3), gamma(1), delta(1), epsilon(1). CF(0) has three main subunits: a(1), b(2) and c(9-12). The alpha and beta chains form an alternating ring which encloses part of the gamma chain. CF(1) is attached to CF(0) by a central stalk formed by the gamma and epsilon chains, while a peripheral stalk is formed by the delta and b chains.

Its subcellular location is the cell inner membrane. It carries out the reaction ATP + H2O + 4 H(+)(in) = ADP + phosphate + 5 H(+)(out). In terms of biological role, produces ATP from ADP in the presence of a proton gradient across the membrane. The catalytic sites are hosted primarily by the beta subunits. The chain is ATP synthase subunit beta 1 from Albidiferax ferrireducens (strain ATCC BAA-621 / DSM 15236 / T118) (Rhodoferax ferrireducens).